A 344-amino-acid polypeptide reads, in one-letter code: Arginine N-succinyltransferase (344 aa).

Leucine 125 contributes to the succinyl-CoA binding site. The Proton donor role is filled by histidine 229.

The protein belongs to the arginine N-succinyltransferase family.

It carries out the reaction succinyl-CoA + L-arginine = N(2)-succinyl-L-arginine + CoA + H(+). The protein operates within amino-acid degradation; L-arginine degradation via AST pathway; L-glutamate and succinate from L-arginine: step 1/5. Catalyzes the transfer of succinyl-CoA to arginine to produce N(2)-succinylarginine. The sequence is that of Arginine N-succinyltransferase from Escherichia coli O127:H6 (strain E2348/69 / EPEC).